Consider the following 160-residue polypeptide: Large ribosomal subunit protein uL15 (160 aa).

Basic and acidic residues predominate over residues 1–13 (MKLNEIRDNEGAR). Residues 1 to 41 (MKLNEIRDNEGARKSRIRVGRGIGSGKGKTGGRGVKGQKSR) are disordered. A compositionally biased stretch (gly residues) spans 21–35 (RGIGSGKGKTGGRGV).

The protein belongs to the universal ribosomal protein uL15 family. In terms of assembly, part of the 50S ribosomal subunit.

Its function is as follows. Binds to the 23S rRNA. This chain is Large ribosomal subunit protein uL15, found in Parvibaculum lavamentivorans (strain DS-1 / DSM 13023 / NCIMB 13966).